The following is a 213-amino-acid chain: Probable transaldolase (213 aa).

The active-site Schiff-base intermediate with substrate is the Lys-83.

This sequence belongs to the transaldolase family. Type 3B subfamily.

It is found in the cytoplasm. It catalyses the reaction D-sedoheptulose 7-phosphate + D-glyceraldehyde 3-phosphate = D-erythrose 4-phosphate + beta-D-fructose 6-phosphate. It functions in the pathway carbohydrate degradation; pentose phosphate pathway; D-glyceraldehyde 3-phosphate and beta-D-fructose 6-phosphate from D-ribose 5-phosphate and D-xylulose 5-phosphate (non-oxidative stage): step 2/3. Transaldolase is important for the balance of metabolites in the pentose-phosphate pathway. This chain is Probable transaldolase, found in Syntrophomonas wolfei subsp. wolfei (strain DSM 2245B / Goettingen).